The primary structure comprises 545 residues: T-complex protein 1 subunit gamma (545 aa).

N-acetylmethionine is present on M1. A disordered region spans residues 1–24 (MMGHRPVLVLSQNTKRESGRKVQS). S11 bears the Phosphoserine mark. Residue K15 forms a Glycyl lysine isopeptide (Lys-Gly) (interchain with G-Cter in SUMO2) linkage. Positions 42, 94, 95, 96, 97, 162, and 163 each coordinate ADP. Positions 42, 94, 95, and 96 each coordinate ATP. Phosphoserine is present on S170. K222 is modified (N6-acetyllysine). Residues S243 and S244 each carry the phosphoserine modification. At Y247 the chain carries Phosphotyrosine. Glycyl lysine isopeptide (Lys-Gly) (interchain with G-Cter in SUMO2) cross-links involve residues K248 and K249. S252 is subject to Phosphoserine. C366 and C372 form a disulfide bridge. Residue K381 forms a Glycyl lysine isopeptide (Lys-Gly) (interchain with G-Cter in SUMO2) linkage. G411 contacts ADP. G411 contacts ATP. Phosphothreonine occurs at positions 430 and 459. Residues G482, E483, E497, and K502 each coordinate ADP. Position 482 (G482) interacts with ATP. ATP is bound at residue E497. The interval 526-545 (HKKKGDDQSRQGGAPDAGQE) is disordered.

This sequence belongs to the TCP-1 chaperonin family. As to quaternary structure, component of the chaperonin-containing T-complex (TRiC), a hexadecamer composed of two identical back-to-back stacked rings enclosing a protein folding chamber. Each ring is made up of eight different subunits: TCP1/CCT1, CCT2, CCT3, CCT4, CCT5, CCT6A/CCT6, CCT7, CCT8. Interacts with PACRG. Interacts with DNAAF4. Interacts with DLEC1.

It localises to the cytoplasm. The catalysed reaction is ATP + H2O = ADP + phosphate + H(+). In terms of biological role, component of the chaperonin-containing T-complex (TRiC), a molecular chaperone complex that assists the folding of actin, tubulin and other proteins upon ATP hydrolysis. The TRiC complex mediates the folding of WRAP53/TCAB1, thereby regulating telomere maintenance. As part of the TRiC complex may play a role in the assembly of BBSome, a complex involved in ciliogenesis regulating transports vesicles to the cilia. The polypeptide is T-complex protein 1 subunit gamma (CCT3) (Macaca fascicularis (Crab-eating macaque)).